Reading from the N-terminus, the 110-residue chain is Putative UPF0377 protein YKL223W (110 aa).

It belongs to the UPF0377 family.

The polypeptide is Putative UPF0377 protein YKL223W (Saccharomyces cerevisiae (strain ATCC 204508 / S288c) (Baker's yeast)).